A 251-amino-acid chain; its full sequence is 5-oxoprolinase subunit A (251 aa).

It belongs to the LamB/PxpA family. As to quaternary structure, forms a complex composed of PxpA, PxpB and PxpC.

It catalyses the reaction 5-oxo-L-proline + ATP + 2 H2O = L-glutamate + ADP + phosphate + H(+). Catalyzes the cleavage of 5-oxoproline to form L-glutamate coupled to the hydrolysis of ATP to ADP and inorganic phosphate. The protein is 5-oxoprolinase subunit A of Tolumonas auensis (strain DSM 9187 / NBRC 110442 / TA 4).